The primary structure comprises 316 residues: Aspartate carbamoyltransferase catalytic subunit (316 aa).

Positions 58 and 59 each coordinate carbamoyl phosphate. K86 is an L-aspartate binding site. Carbamoyl phosphate-binding residues include R108, H136, and Q139. Residues R169 and R223 each coordinate L-aspartate. Positions 264 and 265 each coordinate carbamoyl phosphate.

It belongs to the aspartate/ornithine carbamoyltransferase superfamily. ATCase family. Heterododecamer (2C3:3R2) of six catalytic PyrB chains organized as two trimers (C3), and six regulatory PyrI chains organized as three dimers (R2).

It catalyses the reaction carbamoyl phosphate + L-aspartate = N-carbamoyl-L-aspartate + phosphate + H(+). Its pathway is pyrimidine metabolism; UMP biosynthesis via de novo pathway; (S)-dihydroorotate from bicarbonate: step 2/3. Its function is as follows. Catalyzes the condensation of carbamoyl phosphate and aspartate to form carbamoyl aspartate and inorganic phosphate, the committed step in the de novo pyrimidine nucleotide biosynthesis pathway. The protein is Aspartate carbamoyltransferase catalytic subunit of Dinoroseobacter shibae (strain DSM 16493 / NCIMB 14021 / DFL 12).